Here is a 356-residue protein sequence, read N- to C-terminus: MSTVTITDLARENVRNLTPYQSARRLGGNGDVWLNANEYPTVVEFQLTQQTLNRYPECQPKAVIENYAQYAGVKPEQVLVSRGADEGIELLIRAFCEPGKDAILYCPPTYGMYSVSAETIGVECRTVPTLENWQLDLQGISDKLDGVKVVYVCSPNNPTGQLINPQDFRTLLELTRGKAIVVADEAYIEFCPQASLAGWLAEYPHLAILRTLSKAFALAGLRCGFTLANEEVINLLMKVIAPYPLSTPVADIAAQALSPQGIVAMRERVTQIIAEREYLIAALKEISCVEQVFDSETNYILARFKASSAVFKSLWDQGIILRDQNKQPSLSGCLRITVGTREESQRVIDALRAEQV.

Lys-214 is modified (N6-(pyridoxal phosphate)lysine).

This sequence belongs to the class-II pyridoxal-phosphate-dependent aminotransferase family. Histidinol-phosphate aminotransferase subfamily. As to quaternary structure, homodimer. The cofactor is pyridoxal 5'-phosphate.

It carries out the reaction L-histidinol phosphate + 2-oxoglutarate = 3-(imidazol-4-yl)-2-oxopropyl phosphate + L-glutamate. It participates in amino-acid biosynthesis; L-histidine biosynthesis; L-histidine from 5-phospho-alpha-D-ribose 1-diphosphate: step 7/9. This Escherichia coli O81 (strain ED1a) protein is Histidinol-phosphate aminotransferase.